We begin with the raw amino-acid sequence, 259 residues long: Protein TILLER ANGLE CONTROL 1 (259 aa).

The short motif at 56–62 is the IGT motif element; it reads GILAIGT. Disordered regions lie at residues 96–123, 206–226, and 239–259; these read EEKAEAKQDTPVTAPSEPASALEPAKMH, SCMEKMHHKKPTKPTSKPLKA, and GKKIHPEQLNGRSNAEGPVTA. A compositionally biased stretch (low complexity) spans 109-119; that stretch reads APSEPASALEP.

Belongs to the TAC family. Expressed in the basal part of seedlings.

In terms of biological role, involved in the regulation of tiller growth angle. Promotes horizontal shoot growth. TAC1 and LAZY1 play opposite functions in the regulation of tiller growth angle. The polypeptide is Protein TILLER ANGLE CONTROL 1 (Oryza sativa subsp. indica (Rice)).